Consider the following 206-residue polypeptide: High frequency lysogenization protein HflD homolog (206 aa).

Belongs to the HflD family.

It is found in the cytoplasm. Its subcellular location is the cell inner membrane. In Pseudomonas syringae pv. tomato (strain ATCC BAA-871 / DC3000), this protein is High frequency lysogenization protein HflD homolog.